We begin with the raw amino-acid sequence, 166 residues long: PTS system glucose-specific EIIA component (166 aa).

The PTS EIIA type-1 domain maps to 34–138 (DPVFAQKMMG…SVISPIIITN (105 aa)). Residues H71 and H86 each coordinate Zn(2+). Residue H86 is the Tele-phosphohistidine intermediate; for EIIA activity of the active site. Phosphohistidine; by HPr is present on H86.

Heterodimer with glycerol kinase (glpk). Requires Zn(2+) as cofactor.

It is found in the cytoplasm. The phosphoenolpyruvate-dependent sugar phosphotransferase system (sugar PTS), a major carbohydrate active transport system, catalyzes the phosphorylation of incoming sugar substrates concomitantly with their translocation across the cell membrane. The enzyme II complex composed of PtsG and Crr is involved in glucose transport. The sequence is that of PTS system glucose-specific EIIA component (crr) from Staphylococcus aureus (strain MSSA476).